The sequence spans 150 residues: Ribosome maturation factor RimP (150 aa).

The protein belongs to the RimP family.

It is found in the cytoplasm. Its function is as follows. Required for maturation of 30S ribosomal subunits. The chain is Ribosome maturation factor RimP from Acidithiobacillus ferrooxidans (strain ATCC 23270 / DSM 14882 / CIP 104768 / NCIMB 8455) (Ferrobacillus ferrooxidans (strain ATCC 23270)).